We begin with the raw amino-acid sequence, 235 residues long: Ribonuclease 3 (235 aa).

Residues 7–134 (LKDLQNKIEI…LIASIYLDKG (128 aa)) enclose the RNase III domain. E47 is a binding site for Mg(2+). D51 is a catalytic residue. Residues D120 and E123 each contribute to the Mg(2+) site. Residue E123 is part of the active site. The DRBM domain occupies 161-230 (DYKTKLQEII…AKKAIENMEV (70 aa)).

The protein belongs to the ribonuclease III family. As to quaternary structure, homodimer. Mg(2+) serves as cofactor.

The protein resides in the cytoplasm. The catalysed reaction is Endonucleolytic cleavage to 5'-phosphomonoester.. Functionally, digests double-stranded RNA. Involved in the processing of primary rRNA transcript to yield the immediate precursors to the large and small rRNAs (23S and 16S). Processes some mRNAs, and tRNAs when they are encoded in the rRNA operon. Processes pre-crRNA and tracrRNA of type II CRISPR loci if present in the organism. In Clostridium tetani (strain Massachusetts / E88), this protein is Ribonuclease 3.